The sequence spans 408 residues: MDLIETVRPLAKKTDSKILMVVLDGVGGLPLTVNGETELATAKTPHLDALAAESQLGLVELVAAGITPGSGPGHLSLFGYDPLKYVVGRGALSAVGIGVKLNAGDVAVRGNFASLGESRLIIDRRAGRPSNEKNAEVVAKLRAAIPEIDGTPVEIYSESEHRFVVVFRATGTPLGADVSDVDPQVTGVPPRTAMAHDPASERTAHLVNAFVTRAEAALADESQVNGVLFRGYSDVPHFPNFDEIYQLRAACIASYPMYKGLASLVGMDVLPVEGEEDALAGKVAALKEHWHDYDFFYWHVKKTDSTGEDGDFAAKVKKIELFDALLPELRALQPDVLCIVGDHSTPSKLASHSWHPVPLLINSRYGRKDLAQRYTEEEAQKGSLGLRRGTDVMPLLMANALKLQKYGA.

The protein belongs to the BPG-independent phosphoglycerate mutase family. A-PGAM subfamily.

It catalyses the reaction (2R)-2-phosphoglycerate = (2R)-3-phosphoglycerate. It participates in carbohydrate degradation; glycolysis; pyruvate from D-glyceraldehyde 3-phosphate: step 3/5. Its function is as follows. Catalyzes the interconversion of 2-phosphoglycerate and 3-phosphoglycerate. The chain is Probable 2,3-bisphosphoglycerate-independent phosphoglycerate mutase from Deinococcus geothermalis (strain DSM 11300 / CIP 105573 / AG-3a).